The sequence spans 176 residues: NADH-dependent flavin reductase (176 aa).

Residues 39–46 and 48–49 each bind FAD; these read EDSVHGMT and NA. S52 serves as a coordination point for NAD(+). FAD contacts are provided by residues 63–65, 69–70, and 95–96; these read SIS, KM, and HF. NAD(+) contacts are provided by residues H137 and 157-160; that span reads FYTG.

Belongs to the non-flavoprotein flavin reductase family. In terms of assembly, homodimer. 4-nitrophenol 2-monooxygenase complex consists of an oxygenase component NphA1 and a flavin reductase component NphA2.

The catalysed reaction is a reduced flavin + NAD(+) = an oxidized flavin + NADH + 2 H(+). Catalyzes the reduction of FAD with the concomitant oxidation of NADH. NAD is the physiological electron donor. Subsequently, the reduced flavins diffuse to the oxygenase component NphA2. The protein is NADH-dependent flavin reductase (nphA2) of Rhodococcus sp.